Here is a 602-residue protein sequence, read N- to C-terminus: Probable beta-glucosidase btgE (602 aa).

Residues 1-18 (MRGAFLAAAAAVAGTAMA) form the signal peptide. Disordered regions lie at residues 61 to 94 (PPTL…SVVT) and 116 to 166 (GVDA…TSFS). The span at 74–94 (PSSSSSSEVPSVPSSESSVVT) shows a compositional bias: low complexity. Residues 152–166 (TSESPLPTPGVTSFS) are compositionally biased toward polar residues. Glutamate 443 acts as the Proton donor in catalysis. Catalysis depends on glutamate 538, which acts as the Nucleophile.

It belongs to the glycosyl hydrolase 17 family.

It localises to the secreted. The protein localises to the cell wall. The catalysed reaction is Hydrolysis of terminal, non-reducing beta-D-glucosyl residues with release of beta-D-glucose.. It participates in glycan metabolism; cellulose degradation. In terms of biological role, beta-glucosidases are one of a number of cellulolytic enzymes involved in the degradation of cellulosic biomass. Catalyzes the last step releasing glucose from the inhibitory cellobiose. This is Probable beta-glucosidase btgE (btgE) from Aspergillus flavus (strain ATCC 200026 / FGSC A1120 / IAM 13836 / NRRL 3357 / JCM 12722 / SRRC 167).